We begin with the raw amino-acid sequence, 228 residues long: 3-oxoadipate CoA-transferase subunit A (228 aa).

Position 25-31 (Gly-25–Gly-31) interacts with CoA.

The protein belongs to the 3-oxoacid CoA-transferase subunit A family. Heterodimer.

It catalyses the reaction 3-oxoadipate + succinyl-CoA = 3-oxoadipyl-CoA + succinate. It functions in the pathway aromatic compound metabolism; beta-ketoadipate pathway; acetyl-CoA and succinyl-CoA from 3-oxoadipate: step 1/2. In Acinetobacter baylyi (strain ATCC 33305 / BD413 / ADP1), this protein is 3-oxoadipate CoA-transferase subunit A (pcaI).